The chain runs to 128 residues: Large ribosomal subunit protein bL19 (128 aa).

Belongs to the bacterial ribosomal protein bL19 family.

Its function is as follows. This protein is located at the 30S-50S ribosomal subunit interface and may play a role in the structure and function of the aminoacyl-tRNA binding site. This chain is Large ribosomal subunit protein bL19, found in Verminephrobacter eiseniae (strain EF01-2).